We begin with the raw amino-acid sequence, 847 residues long: DNA mismatch repair protein MutS (847 aa).

602–609 is an ATP binding site; the sequence is GPNMSGKS. The disordered stretch occupies residues 788–807; sequence EKREASLPASRTDSQKVSEQ. Residues 796–807 are compositionally biased toward polar residues; sequence ASRTDSQKVSEQ.

Belongs to the DNA mismatch repair MutS family.

Functionally, this protein is involved in the repair of mismatches in DNA. It is possible that it carries out the mismatch recognition step. This protein has a weak ATPase activity. This Streptococcus gordonii (strain Challis / ATCC 35105 / BCRC 15272 / CH1 / DL1 / V288) protein is DNA mismatch repair protein MutS.